An 89-amino-acid polypeptide reads, in one-letter code: Myrmicitoxin(1)-Pr2c (89 aa).

A signal peptide spans 1–23; the sequence is MEIPKLLYIAVIAIGLSGSLTCA. The propeptide occupies 24–61; sequence TPLANPWADPEAEANPKAKATAEATAEAIAEALAEPEP. Asparagine 88 carries the post-translational modification Asparagine amide.

It belongs to the formicidae venom clade 1 family. In terms of tissue distribution, expressed by the venom gland.

The protein localises to the secreted. Its function is as follows. Vertebrate-selective toxin that causes pain by targeting voltage-gated sodium channels. This chain is Myrmicitoxin(1)-Pr2c, found in Pogonomyrmex rugosus (Desert harvester ant).